The primary structure comprises 208 residues: Uracil phosphoribosyltransferase (208 aa).

Residues Arg78, Arg103, and 130–138 each bind 5-phospho-alpha-D-ribose 1-diphosphate; that span reads DPMLATGGS. Residues Ile193 and 198 to 200 contribute to the uracil site; that span reads GDA. Asp199 is a 5-phospho-alpha-D-ribose 1-diphosphate binding site.

The protein belongs to the UPRTase family. Mg(2+) serves as cofactor.

It catalyses the reaction UMP + diphosphate = 5-phospho-alpha-D-ribose 1-diphosphate + uracil. It participates in pyrimidine metabolism; UMP biosynthesis via salvage pathway; UMP from uracil: step 1/1. Its activity is regulated as follows. Allosterically activated by GTP. Functionally, catalyzes the conversion of uracil and 5-phospho-alpha-D-ribose 1-diphosphate (PRPP) to UMP and diphosphate. The polypeptide is Uracil phosphoribosyltransferase (Proteus mirabilis (strain HI4320)).